Here is a 126-residue protein sequence, read N- to C-terminus: Small ribosomal subunit protein bS6 (126 aa).

The tract at residues 103–126 (LKAKDERKAPEALVEEVEAEDADE) is disordered. The segment covering 115–126 (LVEEVEAEDADE) has biased composition (acidic residues).

Belongs to the bacterial ribosomal protein bS6 family.

Its function is as follows. Binds together with bS18 to 16S ribosomal RNA. The protein is Small ribosomal subunit protein bS6 of Glaesserella parasuis serovar 5 (strain SH0165) (Haemophilus parasuis).